Reading from the N-terminus, the 140-residue chain is Ubiquitin-like protein ATG12 (140 aa).

Residues 1 to 50 are disordered; it reads MAEEPQSVLQLPTSIAAGGEGLTDVSPETTTPEPPSSAAVSPGTEEPAGD. Low complexity predominate over residues 25 to 42; sequence VSPETTTPEPPSSAAVSP. A Glycyl lysine isopeptide (Gly-Lys) (interchain with K-130 in ATG5) cross-link involves residue G140.

This sequence belongs to the ATG12 family. In terms of assembly, forms a conjugate with ATG5. Part of the minor complex composed of 4 sets of ATG12-ATG5 and ATG16L1 (400 kDa); this complex interacts with ATG3 leading to disruption of ATG7 interaction and promotion of ATG8-like proteins lipidation. Forms an 800-kDa complex composed of ATG12-ATG5 and ATG16L2. Interacts with DHX58/RIG-1, IFIH1/MDA5 and MAVS/IPS-1 in monomeric form as well as in ATG12-ATG5 conjugate. The interaction with MAVS is further enhanced upon vesicular stomatitis virus (VSV) infection. Interacts with ATG3; this interaction is essential for phosphatidylethanolamine (PE)-conjugated ATG8-like proteins formation. Interacts with ATG7. Interacts with ATG10. The ATG12-ATG5 conjugate interacts with RAB33A; this interaction is bridged by ATG16L1 and promotes ATG12-ATG5-ATG16L1 complex recruitment to phagophores. Interacts with TECPR1. Interacts with SH3BGRL. The ATG12-ATG5 conjugate interacts with PDCD6IP (via the BRO1 domain); this interaction is bridged by ATG12 and promotes multiple PDCD6IP-mediated functions such as endolysosomal trafficking, macroautophagy and exosome biogenesis. In terms of processing, acetylated by EP300. Ubiquitous.

The protein resides in the cytoplasm. It is found in the preautophagosomal structure membrane. In terms of biological role, ubiquitin-like protein involved in autophagy vesicles formation. Conjugation with ATG5 through a ubiquitin-like conjugating system involving also ATG7 as an E1-like activating enzyme and ATG10 as an E2-like conjugating enzyme, is essential for its function. The ATG12-ATG5 conjugate acts as an E3-like enzyme which is required for lipidation of ATG8 family proteins and their association to the vesicle membranes. As part of the ATG8 conjugation system with ATG5 and ATG16L1, required for recruitment of LRRK2 to stressed lysosomes and induction of LRRK2 kinase activity in response to lysosomal stress. (Microbial infection) May act as a proviral factor. In association with ATG5, negatively regulates the innate antiviral immune response by impairing the type I IFN production pathway upon vesicular stomatitis virus (VSV) infection. Required for the translation of incoming hepatitis C virus (HCV) RNA and, thereby, for the initiation of HCV replication, but not required once infection is established. This is Ubiquitin-like protein ATG12 from Homo sapiens (Human).